The following is a 379-amino-acid chain: Queuine tRNA-ribosyltransferase (379 aa).

The active-site Proton acceptor is Asp-94. Substrate contacts are provided by residues 94–98, Asp-148, Gln-191, and Gly-218; that span reads DSGGF. Residues 249 to 255 are RNA binding; it reads GVGSPDS. Asp-268 functions as the Nucleophile in the catalytic mechanism. Residues 273–277 are RNA binding; important for wobble base 34 recognition; sequence TRIAR. Zn(2+) contacts are provided by Cys-306, Cys-308, Cys-311, and His-337.

The protein belongs to the queuine tRNA-ribosyltransferase family. Homodimer. Within each dimer, one monomer is responsible for RNA recognition and catalysis, while the other monomer binds to the replacement base PreQ1. It depends on Zn(2+) as a cofactor.

It carries out the reaction 7-aminomethyl-7-carbaguanine + guanosine(34) in tRNA = 7-aminomethyl-7-carbaguanosine(34) in tRNA + guanine. It participates in tRNA modification; tRNA-queuosine biosynthesis. Functionally, catalyzes the base-exchange of a guanine (G) residue with the queuine precursor 7-aminomethyl-7-deazaguanine (PreQ1) at position 34 (anticodon wobble position) in tRNAs with GU(N) anticodons (tRNA-Asp, -Asn, -His and -Tyr). Catalysis occurs through a double-displacement mechanism. The nucleophile active site attacks the C1' of nucleotide 34 to detach the guanine base from the RNA, forming a covalent enzyme-RNA intermediate. The proton acceptor active site deprotonates the incoming PreQ1, allowing a nucleophilic attack on the C1' of the ribose to form the product. After dissociation, two additional enzymatic reactions on the tRNA convert PreQ1 to queuine (Q), resulting in the hypermodified nucleoside queuosine (7-(((4,5-cis-dihydroxy-2-cyclopenten-1-yl)amino)methyl)-7-deazaguanosine). The chain is Queuine tRNA-ribosyltransferase from Bacillus cereus (strain G9842).